A 245-amino-acid chain; its full sequence is Ribonuclease 3 (245 aa).

The 130-residue stretch at 19–148 (FRAFQQKLGI…FIGALYLDQG (130 aa)) folds into the RNase III domain. Residue Glu-61 participates in Mg(2+) binding. Asp-65 is an active-site residue. Mg(2+)-binding residues include Asp-134 and Glu-137. Glu-137 is an active-site residue. The 70-residue stretch at 174 to 243 (DYKSQLQELI…AAEALRKLKE (70 aa)) folds into the DRBM domain.

It belongs to the ribonuclease III family. As to quaternary structure, homodimer. Requires Mg(2+) as cofactor.

The protein resides in the cytoplasm. The enzyme catalyses Endonucleolytic cleavage to 5'-phosphomonoester.. Functionally, digests double-stranded RNA. Involved in the processing of primary rRNA transcript to yield the immediate precursors to the large and small rRNAs (23S and 16S). Processes some mRNAs, and tRNAs when they are encoded in the rRNA operon. Processes pre-crRNA and tracrRNA of type II CRISPR loci if present in the organism. The protein is Ribonuclease 3 of Bacillus cytotoxicus (strain DSM 22905 / CIP 110041 / 391-98 / NVH 391-98).